A 258-amino-acid polypeptide reads, in one-letter code: 5-oxoprolinase subunit A (258 aa).

It belongs to the LamB/PxpA family. Forms a complex composed of PxpA, PxpB and PxpC.

The catalysed reaction is 5-oxo-L-proline + ATP + 2 H2O = L-glutamate + ADP + phosphate + H(+). Its function is as follows. Catalyzes the cleavage of 5-oxoproline to form L-glutamate coupled to the hydrolysis of ATP to ADP and inorganic phosphate. The polypeptide is 5-oxoprolinase subunit A (Corynebacterium jeikeium (strain K411)).